A 165-amino-acid chain; its full sequence is MALAEADDGAVVFGEEQEALVLKSWAVMKKDAANLGLRFFLKVFEIAPSAKQMFSFLRDSDVPLEKNPKLKTHAMSVFVMTCEAAAQLRKAGKVTVRETTLKRLGATHLRYGVADGHFEVTGFALLETIKEALPADMWSLEMKKAWAEAYSQLVAAIKREMKPDA.

One can recognise a Globin domain in the interval 12 to 162 (VFGEEQEALV…LVAAIKREMK (151 aa)). The Homodimerization signature appears at 45 to 49 (EIAPS). Serine 55, lysine 69, histidine 73, arginine 103, threonine 107, and histidine 108 together coordinate heme b. Positions 115-127 (DGHFEVTGFALLE) match the Homodimerization motif.

It belongs to the plant globin family. Homodimer. The cofactor is heme b. In vegetative but not in embryonic organs.

It is found in the cytoplasm. Its subcellular location is the nucleus. The enzyme catalyses Fe(III)-heme b-[protein] + nitric oxide + H2O = Fe(II)-heme b-[protein] + nitrite + 2 H(+). Functionally, phytoglobin that reduces nitrite to nitric oxide (NO) under anoxic conditions (e.g. during flooding or in waterlogged soil). May not function as an oxygen storage or transport protein. Has an unusually high affinity for O(2) through an hexacoordinate heme iron because of a very low dissociation constant. In Zea mays subsp. parviglumis (Balsas teosinte), this protein is Anaerobic nitrite reductase GLB1 (HB).